The chain runs to 274 residues: Nuclease (274 aa).

An N-terminal signal peptide occupies residues 1-24 (MGICGKLGVAALVALIVGCSPVQS). His124 acts as the Proton acceptor in catalysis. 7 residues coordinate Mn(2+): Asn155, Asp246, Glu249, Asp255, Phe256, Gln265, and Glu269.

The protein belongs to the DNA/RNA non-specific endonuclease family. As to quaternary structure, monomer. The cofactor is Mn(2+). Mg(2+) serves as cofactor. It depends on Ca(2+) as a cofactor. Co(2+) is required as a cofactor. In terms of processing, the N-terminus is blocked.

It localises to the periplasm. Catalyzes the degradation of both RNA and DNA; has the potential to act as an endonuclease. This chain is Nuclease (nucA), found in Nostoc sp. (strain PCC 7120 / SAG 25.82 / UTEX 2576).